We begin with the raw amino-acid sequence, 314 residues long: tRNA dimethylallyltransferase (314 aa).

12–19 (GPTAAGKS) provides a ligand contact to ATP. Residue 14–19 (TAAGKS) participates in substrate binding. 3 interaction with substrate tRNA regions span residues 37-40 (DSAT), 161-165 (QRIQR), and 245-250 (RCVGYR).

It belongs to the IPP transferase family. As to quaternary structure, monomer. Requires Mg(2+) as cofactor.

The enzyme catalyses adenosine(37) in tRNA + dimethylallyl diphosphate = N(6)-dimethylallyladenosine(37) in tRNA + diphosphate. Catalyzes the transfer of a dimethylallyl group onto the adenine at position 37 in tRNAs that read codons beginning with uridine, leading to the formation of N6-(dimethylallyl)adenosine (i(6)A). This Bordetella petrii (strain ATCC BAA-461 / DSM 12804 / CCUG 43448) protein is tRNA dimethylallyltransferase.